The sequence spans 337 residues: Ketol-acid reductoisomerase (NADP(+)) (337 aa).

The KARI N-terminal Rossmann domain occupies 1–180; that stretch reads MQVYYDKDAD…GGTKGGVIET (180 aa). NADP(+) is bound by residues 24-27, R47, and S51; that span reads YGSQ. The active site involves H106. Position 132 (G132) interacts with NADP(+). The KARI C-terminal knotted domain maps to 181–326; sequence TFREETETDL…AQLRAMMPWI (146 aa). Residues D189, E193, E225, and E229 each contribute to the Mg(2+) site. A substrate-binding site is contributed by S250.

It belongs to the ketol-acid reductoisomerase family. Mg(2+) serves as cofactor.

It catalyses the reaction (2R)-2,3-dihydroxy-3-methylbutanoate + NADP(+) = (2S)-2-acetolactate + NADPH + H(+). The enzyme catalyses (2R,3R)-2,3-dihydroxy-3-methylpentanoate + NADP(+) = (S)-2-ethyl-2-hydroxy-3-oxobutanoate + NADPH + H(+). Its pathway is amino-acid biosynthesis; L-isoleucine biosynthesis; L-isoleucine from 2-oxobutanoate: step 2/4. The protein operates within amino-acid biosynthesis; L-valine biosynthesis; L-valine from pyruvate: step 2/4. Its function is as follows. Involved in the biosynthesis of branched-chain amino acids (BCAA). Catalyzes an alkyl-migration followed by a ketol-acid reduction of (S)-2-acetolactate (S2AL) to yield (R)-2,3-dihydroxy-isovalerate. In the isomerase reaction, S2AL is rearranged via a Mg-dependent methyl migration to produce 3-hydroxy-3-methyl-2-ketobutyrate (HMKB). In the reductase reaction, this 2-ketoacid undergoes a metal-dependent reduction by NADPH to yield (R)-2,3-dihydroxy-isovalerate. The chain is Ketol-acid reductoisomerase (NADP(+)) from Neisseria meningitidis serogroup A / serotype 4A (strain DSM 15465 / Z2491).